A 355-amino-acid polypeptide reads, in one-letter code: UPF0421 protein BCE33L2478 (355 aa).

Transmembrane regions (helical) follow at residues 19-39 (IAVF…IFAV), 74-94 (FTFF…FTIV), 109-129 (TLTA…AFLI), and 131-151 (LATT…ILPP).

The protein belongs to the UPF0421 family.

It localises to the cell membrane. The polypeptide is UPF0421 protein BCE33L2478 (Bacillus cereus (strain ZK / E33L)).